Here is a 598-residue protein sequence, read N- to C-terminus: MEFKLIAEYFDRLEKISSRIQLTALLTDLLKKSDKDVIDKVIYITQGKLWPDFFEKPEIGLGEKLMIKALSVSTNIKEDEIEKQLRILGDLGEVAYKLKRTNSSQNVLSYLGSTKVTKLTVEEVYESLSKIALSEGEGSRDMKIRSLAGLLKKADPLEAKYIIRFIDGRLRVGIGDATIMDALANVFGGGTAARPLIERAYNLRADLGNIAKLLAENGIETIKSIKPEVGIPIRPMLAERLTDPSEILAKVGGKGIVDYKYDGERAQIHKKGEKVYIFSRRLENITRQYPDVVEYIKNSIKSNEVILEGEIVAIDKESGEILPFQNLMHRKRKNDIGEAIKEYPVNVYLFDLMYNDGEDYTQKPLPDRREKLEEIVTQNDIVKVADHKYIDKVNELVEYFHQAISDGTEGVIVKSIGKDSIYQAGARGFLWIKLKKDYQSEMADSVDLVIVGAFYGRGKRGGKLSSLLMAAYDPDKDTFYTVCKVASGFSDAELEEVQKMLSEAKLDKKDPRVESEIQPDIWVKPKYVAEIIGAEITLSPLHTCCKGVVSEEAGLSIRFPRFIRWRDDKSVEEATTPNEILEMYQSRLKKKVEDITET.

Aspartate 258 is a binding site for ATP. Lysine 260 (N6-AMP-lysine intermediate) is an active-site residue. Arginine 265, arginine 280, glutamate 310, phenylalanine 350, arginine 427, and lysine 433 together coordinate ATP.

This sequence belongs to the ATP-dependent DNA ligase family. It depends on Mg(2+) as a cofactor.

The catalysed reaction is ATP + (deoxyribonucleotide)n-3'-hydroxyl + 5'-phospho-(deoxyribonucleotide)m = (deoxyribonucleotide)n+m + AMP + diphosphate.. Functionally, DNA ligase that seals nicks in double-stranded DNA during DNA replication, DNA recombination and DNA repair. The sequence is that of DNA ligase from Sulfolobus acidocaldarius (strain ATCC 33909 / DSM 639 / JCM 8929 / NBRC 15157 / NCIMB 11770).